A 256-amino-acid polypeptide reads, in one-letter code: Thiazole synthase (256 aa).

The active-site Schiff-base intermediate with DXP is the lysine 96. Residues glycine 157, 183 to 184, and 205 to 206 contribute to the 1-deoxy-D-xylulose 5-phosphate site; these read AG and NT.

The protein belongs to the ThiG family. As to quaternary structure, homotetramer. Forms heterodimers with either ThiH or ThiS.

Its subcellular location is the cytoplasm. It catalyses the reaction [ThiS sulfur-carrier protein]-C-terminal-Gly-aminoethanethioate + 2-iminoacetate + 1-deoxy-D-xylulose 5-phosphate = [ThiS sulfur-carrier protein]-C-terminal Gly-Gly + 2-[(2R,5Z)-2-carboxy-4-methylthiazol-5(2H)-ylidene]ethyl phosphate + 2 H2O + H(+). Its pathway is cofactor biosynthesis; thiamine diphosphate biosynthesis. Functionally, catalyzes the rearrangement of 1-deoxy-D-xylulose 5-phosphate (DXP) to produce the thiazole phosphate moiety of thiamine. Sulfur is provided by the thiocarboxylate moiety of the carrier protein ThiS. In vitro, sulfur can be provided by H(2)S. This chain is Thiazole synthase, found in Bacillus anthracis.